A 353-amino-acid chain; its full sequence is Glucose import ATP-binding protein GlcV (353 aa).

One can recognise an ABC transporter domain in the interval 4–241; that stretch reads IIVKNVSKVF…PVSIQVASLI (238 aa). Residues 40 to 46, Q89, and E166 each bind ATP; that span reads SGAGKTT.

This sequence belongs to the ABC transporter superfamily. As to quaternary structure, the complex is composed of two ATP-binding proteins (GlcV), two transmembrane proteins (GlcT and GlcU) and a solute-binding protein (GlcS). Forms transient head-to-tail homodimers in the presence of ATP-Mg(2+).

It is found in the cell membrane. The enzyme catalyses D-glucose(out) + ATP + H2O = D-glucose(in) + ADP + phosphate + H(+). Part of the ABC transporter complex GlcSTUV involved in glucose uptake. Responsible for energy coupling to the transport system. In vitro, as a free subunit, exhibits a constitutive ATPase activity. The polypeptide is Glucose import ATP-binding protein GlcV (Saccharolobus solfataricus (strain ATCC 35092 / DSM 1617 / JCM 11322 / P2) (Sulfolobus solfataricus)).